We begin with the raw amino-acid sequence, 85 residues long: U4-theraphotoxin-Hhn1a (85 aa).

An N-terminal signal peptide occupies residues 1–22; it reads MKVTLIAILTCATVLVLHTTAA. A propeptide spanning residues 23-48 is cleaved from the precursor; that stretch reads EELEAESQLMEVGMPDTELAAVDEER. Cystine bridges form between Cys-52-Cys-66, Cys-56-Cys-77, and Cys-71-Cys-82.

The protein belongs to the neurotoxin 12 (Hwtx-2) family. 02 (Hwtx-2) subfamily. In terms of assembly, monomer. As to expression, expressed by the venom gland.

It localises to the secreted. Functionally, neurotoxin active on both insects and mammals. In Cyriopagopus hainanus (Chinese bird spider), this protein is U4-theraphotoxin-Hhn1a.